The chain runs to 146 residues: Peptide methionine sulfoxide reductase MsrB (146 aa).

The MsrB domain occupies 6-129; that stretch reads SAEAIAKLSA…NSASLRFVPK (124 aa). Cys-118 acts as the Nucleophile in catalysis.

The protein belongs to the MsrB Met sulfoxide reductase family.

It carries out the reaction L-methionyl-[protein] + [thioredoxin]-disulfide + H2O = L-methionyl-(R)-S-oxide-[protein] + [thioredoxin]-dithiol. This is Peptide methionine sulfoxide reductase MsrB from Brucella melitensis biotype 1 (strain ATCC 23456 / CCUG 17765 / NCTC 10094 / 16M).